The primary structure comprises 203 residues: Dephospho-CoA kinase (203 aa).

A DPCK domain is found at 4 to 203 (VIGITGGIAT…EEGYIQSESE (200 aa)). 12 to 17 (ATGKST) is a binding site for ATP.

This sequence belongs to the CoaE family.

It is found in the cytoplasm. It carries out the reaction 3'-dephospho-CoA + ATP = ADP + CoA + H(+). Its pathway is cofactor biosynthesis; coenzyme A biosynthesis; CoA from (R)-pantothenate: step 5/5. Functionally, catalyzes the phosphorylation of the 3'-hydroxyl group of dephosphocoenzyme A to form coenzyme A. In Staphylococcus epidermidis (strain ATCC 12228 / FDA PCI 1200), this protein is Dephospho-CoA kinase.